The following is a 102-amino-acid chain: Large ribosomal subunit protein bL21 (102 aa).

It belongs to the bacterial ribosomal protein bL21 family. Part of the 50S ribosomal subunit. Contacts protein L20.

This protein binds to 23S rRNA in the presence of protein L20. This Nitratidesulfovibrio vulgaris (strain ATCC 29579 / DSM 644 / CCUG 34227 / NCIMB 8303 / VKM B-1760 / Hildenborough) (Desulfovibrio vulgaris) protein is Large ribosomal subunit protein bL21.